A 1046-amino-acid polypeptide reads, in one-letter code: UDP-N-acetylglucosamine--peptide N-acetylglucosaminyltransferase 110 kDa subunit (1046 aa).

Ala-2 is modified (N-acetylalanine). 2 positions are modified to phosphoserine; by GSK3-beta; alternate: Ser-3 and Ser-4. O-linked (GlcNAc) serine; alternate glycosylation is found at Ser-3 and Ser-4. At Ser-20 the chain carries Phosphoserine. 12 TPR repeats span residues 21–54, 89–122, 123–156, 157–190, 191–224, 225–258, 259–292, 293–326, 327–360, 361–394, 395–428, and 429–462; these read FQGLAELAHREYQAGDFEAAERHCMQLWRQEPDN, AEAYSNLGNVYKERGQLQEAIEHYRHALRLKPDF, IDGYINLAAALVAAGDMEGAVQAYVSALQYNPDL, YCVRSDLGNLLKALGRLEEAKACYLKAIETQPNF, AVAWSNLGCVFNAQGEIWLAIHHFEKAVTLDPNF, LDAYINLGNVLKEARIFDRAVAAYLRALSLSPNH, AVVHGNLACVYYEQGLIDLAIDTYRRAIELQPHF, PDAYCNLANALKEKGSVAEAEDCYNTALRLCPTH, ADSLNNLANIKREQGNIEEAVRLYRKALEVFPEF, AAAHSNLASVLQQQGKLQEALMHYKEAIRISPTF, ADAYSNMGNTLKEMQDVQGALQCYTRAIQINPAF, and ADAHSNLASIHKDSGNIPEAIASYRTALKLKPDF. A glycan (O-linked (GlcNAc) serine; by autocatalysis) is linked at Ser-399. Position 454 is a phosphothreonine (Thr-454). The TPR 13; truncated repeat unit spans residues 463–473; that stretch reads PDAYCNLAHCL. Positions 464-466 match the DFP motif motif; the sequence is DAY. The Nuclear localization signal signature appears at 487–503; sequence KKLVSIVAEQLEKNRLP. His-508 serves as the catalytic Proton acceptor. UDP-binding positions include Gln-849, Lys-852, 906–908, 911–914, 930–932, and Asp-935; these read APK, HVRR, and HTT. The residue at position 989 (Tyr-989) is a Phosphotyrosine. The required for phosphatidylinositol 3,4,5-triphosphate binding stretch occupies residues 991–1010; that stretch reads KKIRGKVWKQRISSPLFNTK.

This sequence belongs to the glycosyltransferase 41 family. O-GlcNAc transferase subfamily. As to quaternary structure, monomer; may exist in different oligomerization states in cells. Homotrimer, oligomerizes via TPR repeats 6 and 7. Trimerization is not necessary for activity in vitro, however it increases affinity for UDP-GlcNAc. Component of a THAP1/THAP3-HCFC1-OGT complex. Component of the NSL complex at least composed of MOF/KAT8, KANSL1, KANSL2, KANSL3, MCRS1, PHF20, OGT1/OGT, WDR5 and HCFC1. Found in a complex with KIF5B, RHOT1, RHOT2 and TRAK1. Found in a complex composed of at least SINHCAF, SIN3A, HDAC1, SAP30, RBBP4, OGT and TET1. Component of a complex composed of KMT2E/MLL5, OGT and USP7; the complex stabilizes KMT2E/MLL5, preventing KMT2E/MLL5 ubiquitination and proteasomal-mediated degradation. Interacts (via TPRs 1-6) with SIN3A; the interaction mediates transcriptional repression in parallel with histone deacetylase. Interacts (via TPR 5-6) with TET1, TET2 and TET3. Interacts (via TPR repeats 6 and 7) with ATXN10. Interacts with NSD2. Interacts with PROSER1; this interaction mediates TET2 O-GlcNAcylation and stability by promoting the interaction between OGT and TET2. Post-translationally, ubiquitinated by the SCF(FBXO31) complex, leading to its proteasomal degradation. In terms of processing, phosphorylation on Ser-3 or Ser-4 by GSK3-beta positively regulates its activity. Phosphorylation at Thr-454 by AMPK promotes nuclear localization. Glycosylated via autocatalysis; O-GlcNAcylation at Ser-399 promotes nuclear localization.

The protein localises to the cytoplasm. It localises to the nucleus. Its subcellular location is the cell membrane. The protein resides in the mitochondrion membrane. It is found in the cell projection. The enzyme catalyses L-seryl-[protein] + UDP-N-acetyl-alpha-D-glucosamine = 3-O-(N-acetyl-beta-D-glucosaminyl)-L-seryl-[protein] + UDP + H(+). It carries out the reaction L-threonyl-[protein] + UDP-N-acetyl-alpha-D-glucosamine = 3-O-(N-acetyl-beta-D-glucosaminyl)-L-threonyl-[protein] + UDP + H(+). It participates in protein modification; protein glycosylation. With respect to regulation, subject to product inhibition by UDP. Functionally, catalyzes the transfer of a single N-acetylglucosamine from UDP-GlcNAc to a serine or threonine residue in cytoplasmic and nuclear proteins resulting in their modification with a beta-linked N-acetylglucosamine (O-GlcNAc). Glycosylates a large and diverse number of proteins including histone H2B, AKT1, AMPK, ATG4B, CAPRIN1, EZH2, FNIP1, GSDMD, KRT7, LMNA, LMNB1, LMNB2, RPTOR, HOXA1, PFKL, KMT2E/MLL5, MAPT/TAU, TET2, RBL2, RET, NOD2 and HCFC1. Can regulate their cellular processes via cross-talk between glycosylation and phosphorylation or by affecting proteolytic processing. Involved in insulin resistance in muscle and adipocyte cells via glycosylating insulin signaling components and inhibiting the 'Thr-308' phosphorylation of AKT1, enhancing IRS1 phosphorylation and attenuating insulin signaling. Involved in glycolysis regulation by mediating glycosylation of 6-phosphofructokinase PFKL, inhibiting its activity. Plays a key role in chromatin structure by mediating O-GlcNAcylation of 'Ser-112' of histone H2B: recruited to CpG-rich transcription start sites of active genes via its interaction with TET proteins (TET1, TET2 or TET3). As part of the NSL complex indirectly involved in acetylation of nucleosomal histone H4 on several lysine residues. O-GlcNAcylation of 'Ser-75' of EZH2 increases its stability, and facilitating the formation of H3K27me3 by the PRC2/EED-EZH2 complex. Stabilizes KMT2E/MLL5 by mediating its glycosylation, thereby preventing KMT2E/MLL5 ubiquitination. Regulates circadian oscillation of the clock genes and glucose homeostasis in the liver. Stabilizes clock proteins BMAL1 and CLOCK through O-glycosylation, which prevents their ubiquitination and subsequent degradation. Promotes the CLOCK-BMAL1-mediated transcription of genes in the negative loop of the circadian clock such as PER1/2 and CRY1/2. O-glycosylates HCFC1 and regulates its proteolytic processing and transcriptional activity. Component of a THAP1/THAP3-HCFC1-OGT complex that is required for the regulation of the transcriptional activity of RRM1. Regulates mitochondrial motility in neurons by mediating glycosylation of TRAK1. Promotes autophagy by mediating O-glycosylation of ATG4B. Acts as a regulator of mTORC1 signaling by mediating O-glycosylation of RPTOR and FNIP1: O-GlcNAcylation of RPTOR in response to glucose sufficiency promotes activation of the mTORC1 complex. This is UDP-N-acetylglucosamine--peptide N-acetylglucosaminyltransferase 110 kDa subunit (Ogt) from Mus musculus (Mouse).